The sequence spans 503 residues: Dihydropyrimidinase (503 aa).

Zn(2+) is bound by residues histidine 66, histidine 68, and lysine 158. N6-carboxylysine is present on lysine 158. Tyrosine 163 provides a ligand contact to substrate. The Zn(2+) site is built by histidine 191, histidine 247, and aspartate 325. Substrate is bound at residue asparagine 346.

It belongs to the metallo-dependent hydrolases superfamily. Hydantoinase/dihydropyrimidinase family. As to quaternary structure, homotetramer. Zn(2+) serves as cofactor. Post-translationally, carboxylation allows a single lysine to coordinate two zinc ions.

It catalyses the reaction 5,6-dihydrouracil + H2O = 3-(carbamoylamino)propanoate + H(+). Functionally, catalyzes the second step of the reductive pyrimidine degradation, the reversible hydrolytic ring opening of dihydropyrimidines. Can catalyze the ring opening of 5,6-dihydrouracil to N-carbamyl-alanine and of 5,6-dihydrothymine to N-carbamyl-amino isobutyrate. In Dictyostelium discoideum (Social amoeba), this protein is Dihydropyrimidinase (pyd2).